The chain runs to 743 residues: Alpha-N-acetylglucosaminidase (743 aa).

The signal sequence occupies residues 1-23 (MEAVAVAAAVGVLLLAGAGGAAG). N-linked (GlcNAc...) asparagine glycans are attached at residues Asn-261, Asn-272, Asn-435, Asn-503, Asn-526, and Asn-532.

Belongs to the glycosyl hydrolase 89 family. As to quaternary structure, monomer and homodimer. As to expression, liver, ovary, peripheral blood leukocytes, testis, prostate, spleen, colon, lung, placenta and kidney.

Its subcellular location is the lysosome. The catalysed reaction is Hydrolysis of terminal non-reducing N-acetyl-D-glucosamine residues in N-acetyl-alpha-D-glucosaminides.. In terms of biological role, involved in the degradation of heparan sulfate. The chain is Alpha-N-acetylglucosaminidase (NAGLU) from Homo sapiens (Human).